The chain runs to 227 residues: Killer cell lectin-like receptor subfamily B member 1A (227 aa).

At 1 to 45 the chain is on the cytoplasmic side; the sequence is MDTARVYFGLKPPRTPGAWHESPPSLPPDACRCPRSHRLALKLSC. Residues 31 to 34 carry the LCK-binding motif motif; sequence CRCP. The helical; Signal-anchor for type II membrane protein transmembrane segment at 46–66 threads the bilayer; sequence AGLILLVVTLIGMSVLVRVLI. Over 67–227 the chain is Extracellular; sequence QKPSIEKCYV…TLSNYVGYGH (161 aa). In terms of domain architecture, C-type lectin spans 93–212; sequence ECPQDWLSHR…NSDNRWICQK (120 aa). 3 disulfides stabilise this stretch: Cys94–Cys105, Cys122–Cys210, and Cys189–Cys202.

As to quaternary structure, homodimer; disulfide-linked. Interacts with tyrosine kinase LCK. In terms of tissue distribution, expressed in natural killer cells.

The protein localises to the membrane. In terms of biological role, plays a stimulatory role on natural killer (NK) cell cytotoxicity. This Mus musculus (Mouse) protein is Killer cell lectin-like receptor subfamily B member 1A (Klrb1a).